Here is a 535-residue protein sequence, read N- to C-terminus: Mannan polymerase I complex VAN1 subunit (535 aa).

Over 1 to 64 (MGMFFNLRSN…STPSKFQLTV (64 aa)) the chain is Cytoplasmic. A disordered region spans residues 22–48 (LPISRNGSSNNIKDKRSEHNSNSLKGK). The residue at position 25 (S25) is a Phosphoserine. The helical; Signal-anchor for type II membrane protein transmembrane segment at 65–81 (SITSLIIIAVLSLYLFI) threads the bilayer. The Lumenal portion of the chain corresponds to 82–535 (SFLSGMGIGV…REREKRRQSE (454 aa)). 2 N-linked (GlcNAc...) asparagine glycosylation sites follow: N215 and N251.

This sequence belongs to the ANP1/MMN9/VAN1 family. Component of the M-Pol I complex which contains MNN9 and VAN1. Post-translationally, glycosylated.

It is found in the endoplasmic reticulum membrane. Its subcellular location is the golgi apparatus membrane. In terms of biological role, involved in regulation of the phosphorylation of a number of proteins, some of which appear to be important in cell growth control. Its function is as follows. The M-Pol I complex possesses alpha-1,6-mannosyltransferase activity and is probably involved in the elongation of the mannan backbone of N-linked glycans on cell wall and periplasmic proteins. This is Mannan polymerase I complex VAN1 subunit (VAN1) from Saccharomyces cerevisiae (strain ATCC 204508 / S288c) (Baker's yeast).